Here is a 370-residue protein sequence, read N- to C-terminus: 4-hydroxy-3-methylbut-2-en-1-yl diphosphate synthase (flavodoxin) (370 aa).

Residues Cys-271, Cys-274, Cys-306, and Glu-313 each coordinate [4Fe-4S] cluster.

It belongs to the IspG family. Requires [4Fe-4S] cluster as cofactor.

It catalyses the reaction (2E)-4-hydroxy-3-methylbut-2-enyl diphosphate + oxidized [flavodoxin] + H2O + 2 H(+) = 2-C-methyl-D-erythritol 2,4-cyclic diphosphate + reduced [flavodoxin]. It functions in the pathway isoprenoid biosynthesis; isopentenyl diphosphate biosynthesis via DXP pathway; isopentenyl diphosphate from 1-deoxy-D-xylulose 5-phosphate: step 5/6. Its function is as follows. Converts 2C-methyl-D-erythritol 2,4-cyclodiphosphate (ME-2,4cPP) into 1-hydroxy-2-methyl-2-(E)-butenyl 4-diphosphate. This Actinobacillus pleuropneumoniae serotype 5b (strain L20) protein is 4-hydroxy-3-methylbut-2-en-1-yl diphosphate synthase (flavodoxin).